A 386-amino-acid polypeptide reads, in one-letter code: F420 non-reducing hydrogenase I small subunit (386 aa).

A signal peptide (tat-type signal) is located at residues 1–51 (MVEMSTGTTNLVRTLDSMDFLKMDRRTFMKAVSALGATAFLGTYQTEIVNA). Residues cysteine 67, cysteine 70, cysteine 178, cysteine 227, histidine 273, cysteine 276, cysteine 296, and cysteine 302 each contribute to the [4Fe-4S] cluster site. Residues cysteine 311, cysteine 330, and cysteine 333 each coordinate [3Fe-4S] cluster.

It belongs to the [NiFe]/[NiFeSe] hydrogenase small subunit family. Composed of a large subunit (VhoA), a small subunit (VhoG) and a cytochrome subunit (VhoC). [4Fe-4S] cluster is required as a cofactor. It depends on [3Fe-4S] cluster as a cofactor. Post-translationally, predicted to be exported by the Tat system. The position of the signal peptide cleavage has not been experimentally proven.

It is found in the cell membrane. It carries out the reaction methanophenazine + H2 = dihydromethanophenazine. Part of the F420 non-reducing hydrogenase I complex that catalyzes the reduction of methanophenazine to dihydromethanophenazine. This is F420 non-reducing hydrogenase I small subunit from Methanosarcina mazei (strain ATCC BAA-159 / DSM 3647 / Goe1 / Go1 / JCM 11833 / OCM 88) (Methanosarcina frisia).